The sequence spans 234 residues: Probable chemoreceptor glutamine deamidase CheD 1 (234 aa).

The segment at 183 to 234 (AREAAGPRGERAARARPRVELFGTPAPKAQATPRIELFGTRATQPATRKQEA) is disordered. The span at 190 to 201 (RGERAARARPRV) shows a compositional bias: basic and acidic residues. Residues 223 to 234 (RATQPATRKQEA) are compositionally biased toward polar residues.

It belongs to the CheD family.

It carries out the reaction L-glutaminyl-[protein] + H2O = L-glutamyl-[protein] + NH4(+). In terms of biological role, probably deamidates glutamine residues to glutamate on methyl-accepting chemotaxis receptors (MCPs), playing an important role in chemotaxis. The chain is Probable chemoreceptor glutamine deamidase CheD 1 from Burkholderia thailandensis (strain ATCC 700388 / DSM 13276 / CCUG 48851 / CIP 106301 / E264).